An 81-amino-acid polypeptide reads, in one-letter code: Large ribosomal subunit protein bL31B (81 aa).

It belongs to the bacterial ribosomal protein bL31 family. Type B subfamily. As to quaternary structure, part of the 50S ribosomal subunit.

This is Large ribosomal subunit protein bL31B from Bacillus cereus (strain G9842).